A 935-amino-acid chain; its full sequence is UvrABC system protein A (935 aa).

31 to 38 (GLSGSGKS) serves as a coordination point for ATP. The C4-type zinc-finger motif lies at 254–281 (CFKCKMSFEELEPLSFSFNSPKGACESC). ABC transporter domains are found at residues 310 to 579 (IFGY…NNHS) and 599 to 931 (KEKH…KFLA). 631 to 638 (GVSGSGKS) is a binding site for ATP. A C4-type zinc finger spans residues 731-757 (CEKCQGDGDIKIEMHFLPDVLVQCDSC).

This sequence belongs to the ABC transporter superfamily. UvrA family. As to quaternary structure, forms a heterotetramer with UvrB during the search for lesions.

The protein localises to the cytoplasm. Its function is as follows. The UvrABC repair system catalyzes the recognition and processing of DNA lesions. UvrA is an ATPase and a DNA-binding protein. A damage recognition complex composed of 2 UvrA and 2 UvrB subunits scans DNA for abnormalities. When the presence of a lesion has been verified by UvrB, the UvrA molecules dissociate. This Helicobacter pylori (strain ATCC 700392 / 26695) (Campylobacter pylori) protein is UvrABC system protein A.